Consider the following 163-residue polypeptide: Large ribosomal subunit protein uL10 (163 aa).

It belongs to the universal ribosomal protein uL10 family. As to quaternary structure, part of the ribosomal stalk of the 50S ribosomal subunit. The N-terminus interacts with L11 and the large rRNA to form the base of the stalk. The C-terminus forms an elongated spine to which L12 dimers bind in a sequential fashion forming a multimeric L10(L12)X complex.

In terms of biological role, forms part of the ribosomal stalk, playing a central role in the interaction of the ribosome with GTP-bound translation factors. This is Large ribosomal subunit protein uL10 from Histophilus somni (strain 129Pt) (Haemophilus somnus).